The sequence spans 1379 residues: DNA-directed RNA polymerase subunit beta (1379 aa).

Belongs to the RNA polymerase beta chain family. As to quaternary structure, the RNAP catalytic core consists of 2 alpha, 1 beta, 1 beta' and 1 omega subunit. When a sigma factor is associated with the core the holoenzyme is formed, which can initiate transcription.

It carries out the reaction RNA(n) + a ribonucleoside 5'-triphosphate = RNA(n+1) + diphosphate. Its function is as follows. DNA-dependent RNA polymerase catalyzes the transcription of DNA into RNA using the four ribonucleoside triphosphates as substrates. In Rhizobium johnstonii (strain DSM 114642 / LMG 32736 / 3841) (Rhizobium leguminosarum bv. viciae), this protein is DNA-directed RNA polymerase subunit beta.